A 672-amino-acid chain; its full sequence is MSYPSLFAPLDLGFTTLKNRVLMGSMHTGLEEYPDGAERLAAFYAERARHGVALIVSGGIAPDLTGVGMEGGAMLNDASQIPHHRTITEAVHQEGGKIALQILHTGRYSYQPHLVAPSALQAPINRFVPHELSHEEILQLIDNFARCAQLAREAGYDGVEVMGSEGYLINEFLTLRTNQRSDQWGGDYRNRMRFAVEVVRAVRERVGNDFIIIYRLSMLDLVEDGGTFAETVELAQAIEAAGATIINTGIGWHEARIPTIATPVPRGAFSWVTRKLKGHVSLPLVTTNRINDPQVADDILSRGDADMVSMARPFLADAELLSKAQSGRADEINTCIGCNQACLDQIFVGKVTSCLVNPRACHETKMPILPAVQKKNLAVVGAGPAGLAFAINAAARGHQVTLFDAHSEIGGQFNIAKQIPGKEEFYETLRYYRRMIEVTGVTLKLNHTVTADQLQAFDETILASGIVPRTPPIDGIDHPKVLSYLDVLRDKAPVGNKVAIIGCGGIGFDTAMYLSQPGESTSQNIAGFCNEWGIDSSLQQAGGLSPQGMQIPRSPRQIVMLQRKASKPGQGLGKTTGWIHRTTLLSRGVKMIPGVSYQKIDDDGLHVVINGETQVLAVDNVVICAGQEPNRALAQPLIDSGKTVHLIGGCDVAMELDARRAIAQGTRLALEI.

Residues 25 to 27 (SMH), glycine 59, and glutamine 101 contribute to the FMN site. Residue tyrosine 167 is the Proton donor of the active site. Arginine 176 lines the substrate pocket. Arginine 215 is an FMN binding site. A substrate-binding site is contributed by 253-256 (HEAR). FMN contacts are provided by residues arginine 289 and 311–312 (AR). Cysteine 335 and cysteine 338 together coordinate [4Fe-4S] cluster. Glutamine 340 is a binding site for FAD. Glutamine 340 is an NADP(+) binding site. Positions 342 and 354 each coordinate [4Fe-4S] cluster. Residues alanine 385, aspartate 404, glutamine 412, lysine 422, and valine 449 each contribute to the FAD site. 563-564 (RK) lines the NADP(+) pocket. Residues lysine 567 and tryptophan 578 each contribute to the substrate site. FAD contacts are provided by residues glycine 649 and 656 to 658 (LDA). 654–656 (MEL) provides a ligand contact to NADP(+).

In the N-terminal section; belongs to the NADH:flavin oxidoreductase/NADH oxidase family. Monomer. Requires FMN as cofactor. FAD is required as a cofactor. [4Fe-4S] cluster serves as cofactor.

The enzyme catalyses a 4,5-saturated-(2E)-enoyl-CoA + NADP(+) = a (2E,4E)-dienoyl-CoA + NADPH + H(+). The catalysed reaction is a (2E,4Z)-dienoyl-CoA + NADPH + H(+) = a 4,5-saturated-(2E)-enoyl-CoA + NADP(+). It carries out the reaction (2E)-decenoyl-CoA + NADP(+) = (2E,4E)-decadienoyl-CoA + NADPH + H(+). It catalyses the reaction (2E)-decenoyl-CoA + NADP(+) = (2E,4Z)-decadienoyl-CoA + NADPH + H(+). The protein operates within lipid metabolism; fatty acid beta-oxidation. With respect to regulation, is non-competitively inhibited by NADH. Functions as an auxiliary enzyme in the beta-oxidation of unsaturated fatty acids with double bonds at even carbon positions. Catalyzes the NADPH-dependent reduction of the C4-C5 double bond of the acyl chain of 2,4-dienoyl-CoA to yield 2-trans-enoyl-CoA. Acts on both isomers, 2-trans,4-cis- and 2-trans,4-trans-decadienoyl-CoA, with almost equal efficiency. Is not active with NADH instead of NADPH. Does not show cis-&gt;trans isomerase activity. In Escherichia coli (strain K12), this protein is 2,4-dienoyl-CoA reductase [(2E)-enoyl-CoA-producing].